The following is a 177-amino-acid chain: Large ribosomal subunit protein uL6 (177 aa).

The protein belongs to the universal ribosomal protein uL6 family. In terms of assembly, part of the 50S ribosomal subunit.

Its function is as follows. This protein binds to the 23S rRNA, and is important in its secondary structure. It is located near the subunit interface in the base of the L7/L12 stalk, and near the tRNA binding site of the peptidyltransferase center. The sequence is that of Large ribosomal subunit protein uL6 from Pseudomonas fluorescens (strain Pf0-1).